A 179-amino-acid polypeptide reads, in one-letter code: Large ribosomal subunit protein uL6 (179 aa).

Belongs to the universal ribosomal protein uL6 family. As to quaternary structure, part of the 50S ribosomal subunit.

This protein binds to the 23S rRNA, and is important in its secondary structure. It is located near the subunit interface in the base of the L7/L12 stalk, and near the tRNA binding site of the peptidyltransferase center. The chain is Large ribosomal subunit protein uL6 from Herpetosiphon aurantiacus (strain ATCC 23779 / DSM 785 / 114-95).